The chain runs to 490 residues: Cobyric acid synthase (490 aa).

Positions 252 to 439 (RLKVVVPVLP…LHGLFESTAA (188 aa)) constitute a GATase cobBQ-type domain. The active-site Nucleophile is cysteine 333. Histidine 431 is a catalytic residue.

This sequence belongs to the CobB/CobQ family. CobQ subfamily.

The protein operates within cofactor biosynthesis; adenosylcobalamin biosynthesis. Its function is as follows. Catalyzes amidations at positions B, D, E, and G on adenosylcobyrinic A,C-diamide. NH(2) groups are provided by glutamine, and one molecule of ATP is hydrogenolyzed for each amidation. The polypeptide is Cobyric acid synthase (Pseudomonas aeruginosa (strain LESB58)).